The sequence spans 396 residues: Elongation factor Tu (396 aa).

One can recognise a tr-type G domain in the interval 10–206 (KPHVNVGTIG…ALDTYIPTPE (197 aa)). The tract at residues 19-26 (GHVDHGKT) is G1. Residue 19-26 (GHVDHGKT) participates in GTP binding. Thr26 lines the Mg(2+) pocket. The G2 stretch occupies residues 60–64 (GITIN). The G3 stretch occupies residues 81-84 (DCPG). GTP-binding positions include 81-85 (DCPGH) and 136-139 (NKCD). The tract at residues 136–139 (NKCD) is G4. Residues 174-176 (SAK) form a G5 region.

The protein belongs to the TRAFAC class translation factor GTPase superfamily. Classic translation factor GTPase family. EF-Tu/EF-1A subfamily. As to quaternary structure, monomer.

The protein resides in the cytoplasm. It catalyses the reaction GTP + H2O = GDP + phosphate + H(+). Its function is as follows. GTP hydrolase that promotes the GTP-dependent binding of aminoacyl-tRNA to the A-site of ribosomes during protein biosynthesis. This chain is Elongation factor Tu, found in Cupriavidus necator (strain ATCC 17699 / DSM 428 / KCTC 22496 / NCIMB 10442 / H16 / Stanier 337) (Ralstonia eutropha).